The sequence spans 388 residues: Protein DVU_0534 (388 aa).

A run of 10 helical transmembrane segments spans residues 10-31 (LMTP…LTVL), 57-78 (LLCG…YLFG), 89-106 (AITT…ALNY), 130-144 (EVGL…VLFV), 166-191 (LTLV…LFLI), 199-222 (LWYS…SMVI), 254-265 (AASFVLAGYFMI), 291-306 (MLGF…ALGV), 316-328 (FASV…IVMN), and 354-368 (IGIS…ITVY).

It belongs to the NrfD family.

The protein resides in the cell membrane. Its function is as follows. HMWC (high-molecular-weight cytochrome c), ORF2, ORF3, ORF4, ORF5 and ORF6 in the HMC operon form a transmembrane protein complex that allows electron flow from the periplasmic hydrogenase to the cytoplasmic enzymes that catalyze reduction of sulfates. This is Protein DVU_0534 from Nitratidesulfovibrio vulgaris (strain ATCC 29579 / DSM 644 / CCUG 34227 / NCIMB 8303 / VKM B-1760 / Hildenborough) (Desulfovibrio vulgaris).